Consider the following 158-residue polypeptide: Succinate dehydrogenase [ubiquinone] cytochrome b small subunit, mitochondrial (158 aa).

A mitochondrion-targeting transit peptide spans 1–55 (MALWRLSVLCGAREGRALFLRTPVVRPALVSAFLQDRPAQGWCGTQHIHLSPSHH). Residues 56-62 (SGSKAAS) lie on the Mitochondrial matrix side of the membrane. Residues 63–84 (LHWTGERVVSVLLLGLIPAAYL) traverse the membrane as a helical segment. Topologically, residues 85 to 89 (NPCSA) are mitochondrial intermembrane. Residues 90–110 (MDYSLAATLTLHSHWGIGQVV) traverse the membrane as a helical segment. Residue His-101 coordinates heme b. The Mitochondrial matrix segment spans residues 111–119 (TDYVHGDAV). Residue Tyr-113 participates in a ubiquinone binding. Residues 120–141 (QKAAKTGLLVLSAFTFAGLCYF) form a helical membrane-spanning segment. Topologically, residues 142-158 (NYHDVGICKAVAMLWKL) are mitochondrial intermembrane.

The protein belongs to the CybS family. As to quaternary structure, component of complex II composed of four subunits: the flavoprotein (FP) SDHA, iron-sulfur protein (IP) SDHB, and a cytochrome b560 composed of SDHC and SDHD.

It localises to the mitochondrion inner membrane. It participates in carbohydrate metabolism; tricarboxylic acid cycle. In terms of biological role, membrane-anchoring subunit of succinate dehydrogenase (SDH) that is involved in complex II of the mitochondrial electron transport chain and is responsible for transferring electrons from succinate to ubiquinone (coenzyme Q). SDH also oxidizes malate to the non-canonical enol form of oxaloacetate, enol-oxaloacetate. Enol-oxaloacetate, which is a potent inhibitor of the succinate dehydrogenase activity, is further isomerized into keto-oxaloacetate. The chain is Succinate dehydrogenase [ubiquinone] cytochrome b small subunit, mitochondrial (SDHD) from Bos taurus (Bovine).